The following is a 427-amino-acid chain: Adenylosuccinate synthetase (427 aa).

Residues 12–18 and 40–42 each bind GTP; these read GDEGKGK and GHT. The Proton acceptor role is filled by D13. Mg(2+)-binding residues include D13 and G40. IMP-binding positions include 13 to 16, 38 to 41, T128, R142, Q223, T238, and R302; these read DEGK and NAGH. H41 (proton donor) is an active-site residue. 298 to 304 contributes to the substrate binding site; that stretch reads TTTGRPR. Residues R304, 330–332, and 412–414 each bind GTP; these read SID and SVG.

It belongs to the adenylosuccinate synthetase family. Homodimer. Requires Mg(2+) as cofactor.

It localises to the cytoplasm. It catalyses the reaction IMP + L-aspartate + GTP = N(6)-(1,2-dicarboxyethyl)-AMP + GDP + phosphate + 2 H(+). It participates in purine metabolism; AMP biosynthesis via de novo pathway; AMP from IMP: step 1/2. In terms of biological role, plays an important role in the de novo pathway of purine nucleotide biosynthesis. Catalyzes the first committed step in the biosynthesis of AMP from IMP. The polypeptide is Adenylosuccinate synthetase (Staphylococcus epidermidis (strain ATCC 12228 / FDA PCI 1200)).